The sequence spans 561 residues: Cytochrome P450 monooxygenase avaL (561 aa).

A helical membrane pass occupies residues 19–39 (IAASCALVCIVSACYVVWSLL). Cys-508 is a heme binding site.

Belongs to the cytochrome P450 family. Heme is required as a cofactor.

The protein localises to the membrane. Its pathway is secondary metabolite biosynthesis. Functionally, cytochrome P450 monooxygenase; part of the cluster that mediates the biosynthesis of a highly modified cyclo-arginine-tryptophan dipeptide (cRW). The first step of the pathway is perfornmed by the arginine-containing cyclodipeptide synthase (RCPDS) avaA that acts as the scaffold-generating enzyme and is responsible for formation of the cyclo-Arg-Trp (cRW) diketopiperazine. AvaB then acts as a multifunctional flavoenzyme that is responsible for generating the cyclo-Arg-formylkynurenine DKP, which can be deformylated by avaC. AvaB then further catalyzes an additional N-oxidation followed by cyclization and dehydration. The next step is an N-acetylation of the guanidine group catalyzed by the arginine N-acetyltransferase avaD. The roles of the additional enzymes identified within the ava cluster still have to be determined. This Aspergillus versicolor protein is Cytochrome P450 monooxygenase avaL.